We begin with the raw amino-acid sequence, 365 residues long: MSAAQIFNTVHVNGSSPYDVHIGSGLNELIVQRAAESGAEQVAILHQPSMDDIASELDAALVAAGLKVLHLNVPDAENGKSLEVAGQCWDELGGAAFGRRDIVIGLGGGAATDLAGFVAAAWMRGVRVIQVPTTLLAMVDAAVGGKTGINTAAGKNLVGAFHEPDAVFIDTERLATLPDAEIIAGSAEIIKTGFIADPEILRLYETDPAACLKKEVEGSHLPELIWRSVTVKGSVVGQDLKESSLREILNYGHTFAHAVELRENFRWRHGNAVAVGMMFIANLSHKLGLIDAPLLERHRSILAAIGLPTSYEGGAFDELYDGMTRDKKNRDGNIRFVALTAVGEVTRIEGPSKQDLQSAYEAISH.

NAD(+) contacts are provided by residues 75–80 (DAENGK), 109–113 (GAATD), 133–134 (TT), Lys146, and Lys155. Positions 188, 253, and 269 each coordinate Zn(2+).

It belongs to the sugar phosphate cyclases superfamily. Dehydroquinate synthase family. Co(2+) is required as a cofactor. It depends on Zn(2+) as a cofactor. Requires NAD(+) as cofactor.

It localises to the cytoplasm. The enzyme catalyses 7-phospho-2-dehydro-3-deoxy-D-arabino-heptonate = 3-dehydroquinate + phosphate. It participates in metabolic intermediate biosynthesis; chorismate biosynthesis; chorismate from D-erythrose 4-phosphate and phosphoenolpyruvate: step 2/7. Its function is as follows. Catalyzes the conversion of 3-deoxy-D-arabino-heptulosonate 7-phosphate (DAHP) to dehydroquinate (DHQ). In Corynebacterium glutamicum (strain R), this protein is 3-dehydroquinate synthase.